Consider the following 496-residue polypeptide: Glycylpeptide N-tetradecanoyltransferase 1 (496 aa).

The segment at 1–82 (MADESETAVK…SAQDQPVKMN (82 aa)) is disordered. Phosphoserine occurs at positions 31 and 47. Basic residues predominate over residues 55-66 (KKKKKKQKKKKE). Phosphoserine is present on Ser-83. Tetradecanoyl-CoA is bound by residues Gln-118, Phe-119, Trp-120, Phe-247, Leu-248, Cys-249, Val-250, Ser-256, Arg-258, Val-259, and Ala-260.

It belongs to the NMT family.

Its subcellular location is the cytoplasm. It is found in the cytosol. It localises to the membrane. The enzyme catalyses N-terminal glycyl-[protein] + tetradecanoyl-CoA = N-tetradecanoylglycyl-[protein] + CoA + H(+). It catalyses the reaction N-terminal glycyl-L-lysyl-[protein] + tetradecanoyl-CoA = N-terminal glycyl-(N(6)-tetradecanoyl)-L-lysyl-[protein] + CoA + H(+). Functionally, adds a myristoyl group to the N-terminal glycine residue of certain cellular and viral proteins. Also able to mediate N-terminal lysine myristoylation of proteins: catalyzes myristoylation of ARF6 on both 'Gly-2' and 'Lys-3'. Lysine myristoylation is required to maintain ARF6 on membranes during the GTPase cycle. The chain is Glycylpeptide N-tetradecanoyltransferase 1 (NMT1) from Pongo abelii (Sumatran orangutan).